The chain runs to 938 residues: Isoleucine--tRNA ligase (938 aa).

The short motif at 58 to 68 (PYANGSIHIGH) is the 'HIGH' region element. Glutamate 561 provides a ligand contact to L-isoleucyl-5'-AMP. Positions 602 to 606 (KMSKS) match the 'KMSKS' region motif. An ATP-binding site is contributed by lysine 605. 4 residues coordinate Zn(2+): cysteine 901, cysteine 904, cysteine 921, and cysteine 924.

The protein belongs to the class-I aminoacyl-tRNA synthetase family. IleS type 1 subfamily. Monomer. It depends on Zn(2+) as a cofactor.

The protein localises to the cytoplasm. It carries out the reaction tRNA(Ile) + L-isoleucine + ATP = L-isoleucyl-tRNA(Ile) + AMP + diphosphate. Catalyzes the attachment of isoleucine to tRNA(Ile). As IleRS can inadvertently accommodate and process structurally similar amino acids such as valine, to avoid such errors it has two additional distinct tRNA(Ile)-dependent editing activities. One activity is designated as 'pretransfer' editing and involves the hydrolysis of activated Val-AMP. The other activity is designated 'posttransfer' editing and involves deacylation of mischarged Val-tRNA(Ile). This is Isoleucine--tRNA ligase from Klebsiella pneumoniae (strain 342).